Consider the following 193-residue polypeptide: Flagellin B1 (193 aa).

Residues M1–G12 constitute a propeptide that is removed on maturation.

This sequence belongs to the archaeal flagellin family. In terms of processing, glycosylated.

Its subcellular location is the archaeal flagellum. Flagellin is the subunit protein which polymerizes to form the filaments of archaeal flagella. The polypeptide is Flagellin B1 (flaB1) (Halobacterium salinarum (strain ATCC 700922 / JCM 11081 / NRC-1) (Halobacterium halobium)).